The primary structure comprises 424 residues: uncharacterized protein (424 aa).

Belongs to the serpin family.

This is an uncharacterized protein from Methanosarcina acetivorans (strain ATCC 35395 / DSM 2834 / JCM 12185 / C2A).